The sequence spans 506 residues: Anaerobic nitric oxide reductase transcription regulator NorR (506 aa).

Asp57 carries the 4-aspartylphosphate modification. Residues 187-416 enclose the Sigma-54 factor interaction domain; that stretch reads MIGLSPAMTQ…LEHAIHRAVV (230 aa). ATP is bound by residues 215–222 and 278–287; these read GETGTGKE and ADNGTLFLDE. Positions 481-500 form a DNA-binding region, H-T-H motif; that stretch reads WAASARALETDVANLHRLAK.

The protein operates within nitrogen metabolism; nitric oxide reduction. Its function is as follows. Required for the expression of anaerobic nitric oxide (NO) reductase, acts as a transcriptional activator for at least the norVW operon. Activation also requires sigma-54. The polypeptide is Anaerobic nitric oxide reductase transcription regulator NorR (Salmonella arizonae (strain ATCC BAA-731 / CDC346-86 / RSK2980)).